A 594-amino-acid polypeptide reads, in one-letter code: Aspartate--tRNA(Asp/Asn) ligase (594 aa).

L-aspartate is bound at residue glutamate 175. The aspartate stretch occupies residues 199–202 (QQFK). L-aspartate contacts are provided by arginine 221 and histidine 455. 221 to 223 (RDE) contacts ATP. Residue glutamate 489 participates in ATP binding. Residue arginine 496 coordinates L-aspartate. Position 541–544 (541–544 (GIDR)) interacts with ATP.

This sequence belongs to the class-II aminoacyl-tRNA synthetase family. Type 1 subfamily. In terms of assembly, homodimer.

It localises to the cytoplasm. It catalyses the reaction tRNA(Asx) + L-aspartate + ATP = L-aspartyl-tRNA(Asx) + AMP + diphosphate. Its function is as follows. Aspartyl-tRNA synthetase with relaxed tRNA specificity since it is able to aspartylate not only its cognate tRNA(Asp) but also tRNA(Asn). Reaction proceeds in two steps: L-aspartate is first activated by ATP to form Asp-AMP and then transferred to the acceptor end of tRNA(Asp/Asn). The chain is Aspartate--tRNA(Asp/Asn) ligase from Pelagibacter ubique (strain HTCC1062).